The primary structure comprises 396 residues: Probable intron-encoded endonuclease aI3 (396 aa).

Residues 51-90 (TNNTNNNNPADSSSYESRMRAAGNSNSNSNSNSDSNINNT) are disordered. Positions 74–90 (NSNSNSNSNSDSNINNT) are enriched in low complexity.

The protein belongs to the LAGLIDADG endonuclease family.

Its subcellular location is the mitochondrion. In terms of biological role, mitochondrial DNA endonuclease involved in intron homing. The polypeptide is Probable intron-encoded endonuclease aI3 (aI3) (Kluyveromyces lactis (strain ATCC 8585 / CBS 2359 / DSM 70799 / NBRC 1267 / NRRL Y-1140 / WM37) (Yeast)).